The primary structure comprises 232 residues: Mitochondrial import inner membrane translocase subunit Tim21 (232 aa).

A mitochondrion-targeting transit peptide spans 1–31 (MLPRFLWRPVLCSYRALGSPSRSLTVSYRNL). A helical transmembrane segment spans residues 96-116 (FTYFIVVLIGIGVTGGLFYVV).

Belongs to the TIM21 family.

The protein resides in the mitochondrion membrane. In terms of biological role, may participate in the translocation of transit peptide-containing proteins across the mitochondrial inner membrane. The protein is Mitochondrial import inner membrane translocase subunit Tim21 (timm21) of Xenopus laevis (African clawed frog).